A 629-amino-acid polypeptide reads, in one-letter code: Iron multicopper oxidase fer1 (629 aa).

Positions 1-29 (MVAPQRRTVMPALGLLASSLCSLLLTANA) are cleaved as a signal peptide. Plastocyanin-like domains lie at 44 to 164 (VNPD…IHPD) and 175 to 338 (DDYT…TISY). N-linked (GlcNAc...) asparagine glycans are attached at residues Asn-58 and Asn-69. Cu cation-binding residues include His-91 and His-93. Asn-98 carries N-linked (GlcNAc...) asparagine glycosylation. Positions 144 and 146 each coordinate Cu cation. N-linked (GlcNAc...) asparagine glycans are attached at residues Asn-188, Asn-222, Asn-236, Asn-253, Asn-303, Asn-331, and Asn-398. One can recognise a Plastocyanin-like 3 domain in the interval 401 to 537 (YVAPQVPALF…LASIFIEAPD (137 aa)). 3 residues coordinate Cu cation: His-452, His-455, and His-457. A glycan (N-linked (GlcNAc...) asparagine) is linked at Asn-482. Residues His-517, Cys-518, His-519, and His-523 each coordinate Cu cation. A glycan (N-linked (GlcNAc...) asparagine) is linked at Asn-569. The helical transmembrane segment at 592–612 (AIAAFTGCIITGLLGLATVVV) threads the bilayer.

It belongs to the multicopper oxidase family. Cu cation is required as a cofactor.

It localises to the cell membrane. In terms of biological role, iron transport multicopper oxidase, which is required for Fe(2+) high affinity uptake. May be required to oxidize Fe(2+) and release it from the transporter. Essential component of copper-dependent iron transport. The chain is Iron multicopper oxidase fer1 from Mycosarcoma maydis (Corn smut fungus).